Here is a 323-residue protein sequence, read N- to C-terminus: Protein prune homolog 2 (323 aa).

Disordered regions lie at residues 1–67 and 79–110; these read MDIP…EIDI and DSFE…AEEE. The segment covering 40–52 has biased composition (polar residues); sequence PNINLSLDQSEGS. Over residues 57–67 the composition is skewed to acidic residues; that stretch reads DNLDSPDEIDI. In terms of domain architecture, CRAL-TRIO spans 130–291; the sequence is DMKVIEPYRR…SIIKLDEELR (162 aa).

The protein resides in the cytoplasm. Functionally, may play an important role in regulating differentiation, survival and aggressiveness of the tumor cells. The chain is Protein prune homolog 2 (PRUNE2) from Pongo abelii (Sumatran orangutan).